The sequence spans 625 residues: Chaperone protein HtpG (625 aa).

Residues 1-332 form an a; substrate-binding region; it reads MSNKQNTAVQ…TEDLSLNVSR (332 aa). The interval 333–545 is b; sequence EIVQSSPVMS…KDAMDSQMER (213 aa). A c region spans residues 546–625; it reads MMKMMQQEMP…ELIEAATLSR (80 aa).

Belongs to the heat shock protein 90 family. As to quaternary structure, homodimer.

It is found in the cytoplasm. Functionally, molecular chaperone. Has ATPase activity. This Chlorobium luteolum (strain DSM 273 / BCRC 81028 / 2530) (Pelodictyon luteolum) protein is Chaperone protein HtpG.